The primary structure comprises 102 residues: Small ribosomal subunit protein uS10 (102 aa).

This sequence belongs to the universal ribosomal protein uS10 family. In terms of assembly, part of the 30S ribosomal subunit.

Involved in the binding of tRNA to the ribosomes. The polypeptide is Small ribosomal subunit protein uS10 (Methanothermobacter thermautotrophicus (strain ATCC 29096 / DSM 1053 / JCM 10044 / NBRC 100330 / Delta H) (Methanobacterium thermoautotrophicum)).